A 283-amino-acid chain; its full sequence is MMGGKAALLLALVAVTLAVVEIQADAGYGYGGGYPTPTPKPPAKGPKPEKPPTKGHGHKPEKPPKEHKPTPPTYTPSPKPTPPPATPKPTPPTYTPSPKPKSPVYPPPPKASTPPTYTPSPKPPATKPPTYPTPKPPATKPPTPPVYTPSPKPPVTKPPTPKPTPPVYTPNPKPPVTKPPTHTPSPKPPTSKPTPPVYTPSPKPPKPSPPTYTPTPKPPATKPPTSTPTHPKPTPHTPYPQAHPPTYKPAPKPSPPAPTPPTYTPPVSHTPSSPPPPPPPPYY.

Residues 1–24 (MMGGKAALLLALVAVTLAVVEIQA) form the signal peptide. The interval 27-283 (GYGYGGGYPT…PPPPPPPPYY (257 aa)) is disordered. The segment covering 36-45 (TPTPKPPAKG) has biased composition (pro residues). Residues 46–69 (PKPEKPPTKGHGHKPEKPPKEHKP) are compositionally biased toward basic and acidic residues. Pro residues-rich tracts occupy residues 70–264 (TPPT…PTYT) and 272–283 (SSPPPPPPPPYY).

In terms of processing, hydroxylated on proline residues in the S-P-P-P-P repeat. Post-translationally, O-glycosylated on hydroxyprolines.

It is found in the secreted. It localises to the primary cell wall. In terms of biological role, structural component in primary cell wall. The chain is Extensin (HRGP) from Sorghum bicolor (Sorghum).